Here is a 289-residue protein sequence, read N- to C-terminus: ATP synthase gamma chain (289 aa).

The protein belongs to the ATPase gamma chain family. In terms of assembly, F-type ATPases have 2 components, CF(1) - the catalytic core - and CF(0) - the membrane proton channel. CF(1) has five subunits: alpha(3), beta(3), gamma(1), delta(1), epsilon(1). CF(0) has three main subunits: a, b and c.

It localises to the cell inner membrane. Produces ATP from ADP in the presence of a proton gradient across the membrane. The gamma chain is believed to be important in regulating ATPase activity and the flow of protons through the CF(0) complex. The protein is ATP synthase gamma chain of Haemophilus influenzae (strain ATCC 51907 / DSM 11121 / KW20 / Rd).